Consider the following 261-residue polypeptide: Protein FAM78B (261 aa).

It belongs to the FAM78 family.

This Homo sapiens (Human) protein is Protein FAM78B (FAM78B).